Consider the following 447-residue polypeptide: ATP-dependent protease ATPase subunit HslU (447 aa).

Residues Ile18, 60-65, Asp259, Glu325, and Arg397 contribute to the ATP site; that span reads GVGKTE.

This sequence belongs to the ClpX chaperone family. HslU subfamily. As to quaternary structure, a double ring-shaped homohexamer of HslV is capped on each side by a ring-shaped HslU homohexamer. The assembly of the HslU/HslV complex is dependent on binding of ATP.

The protein resides in the cytoplasm. In terms of biological role, ATPase subunit of a proteasome-like degradation complex; this subunit has chaperone activity. The binding of ATP and its subsequent hydrolysis by HslU are essential for unfolding of protein substrates subsequently hydrolyzed by HslV. HslU recognizes the N-terminal part of its protein substrates and unfolds these before they are guided to HslV for hydrolysis. This Burkholderia cenocepacia (strain HI2424) protein is ATP-dependent protease ATPase subunit HslU.